The following is a 1057-amino-acid chain: Glycine dehydrogenase (decarboxylating), mitochondrial (1057 aa).

The transit peptide at 1–86 (MERARRLANR…GVGYPSQSRS (86 aa)) directs the protein to the mitochondrion. Basic and acidic residues predominate over residues 18–27 (SEAKQNRKTE). A disordered region spans residues 18–47 (SEAKQNRKTESTSTTTTTPLPFSLSGSSSR). The span at 28-47 (STSTTTTTPLPFSLSGSSSR) shows a compositional bias: low complexity. N6-(pyridoxal phosphate)lysine is present on Lys792.

Belongs to the GcvP family. In terms of assembly, homodimer. The glycine cleavage system is composed of four proteins: P, T, L and H. Pyridoxal 5'-phosphate is required as a cofactor. Highly expressed in leaves. Detected in roots and embryos.

The protein resides in the mitochondrion. The enzyme catalyses N(6)-[(R)-lipoyl]-L-lysyl-[glycine-cleavage complex H protein] + glycine + H(+) = N(6)-[(R)-S(8)-aminomethyldihydrolipoyl]-L-lysyl-[glycine-cleavage complex H protein] + CO2. Its function is as follows. The glycine cleavage system catalyzes the degradation of glycine. The P protein binds the alpha-amino group of glycine through its pyridoxal phosphate cofactor; CO(2) is released and the remaining methylamine moiety is then transferred to the lipoamide cofactor of the H protein. The chain is Glycine dehydrogenase (decarboxylating), mitochondrial (GDCSP) from Pisum sativum (Garden pea).